The following is a 345-amino-acid chain: Ubiquitin-associated domain-containing protein 2 (345 aa).

The signal sequence occupies residues 1–39; sequence MFTSTGSSGLYKAPLSKSLLLVPSALSLLLTLLLPHCQK. At 40–91 the chain is on the extracellular side; the sequence is FFVYDLHAVKHDLQIWRLICGRIICLDLKDAFCSGLLIYNFRIFERRYGSRK. The helical transmembrane segment at 92–112 threads the bilayer; that stretch reads FASFLLGSWVLSALFDFILVE. Topologically, residues 113–125 are cytoplasmic; that stretch reads AVQYSLGVTVASN. The chain crosses the membrane as a helical span at residues 126–146; that stretch reads LPSGFLAPVFALFVPFHCSIP. Over 147–163 the chain is Extracellular; that stretch reads RVQVAQILGPLSITNKT. The N-linked (GlcNAc...) asparagine glycan is linked to asparagine 161. Residues 164–184 traverse the membrane as a helical segment; the sequence is LIYILGLQLFTSGSYIWIVAM. The Cytoplasmic segment spans residues 185–345; it reads SGLISGMCYD…NVATNFLLQH (161 aa). Residues 287–306 form a disordered region; that stretch reads NINYQDGPRSEQRASPPLEV. In terms of domain architecture, UBA spans 305-345; it reads EVSEEQVARLMEMGFSRGDALEALRASNNDLNVATNFLLQH.

Interacts with LMBR1L, FAF2, AMFR and VCP.

It is found in the endoplasmic reticulum membrane. Functionally, restricts trafficking of FAF2 from the endoplasmic reticulum to lipid droplets. In association with LMBR1L and E3 ubiquitin-protein ligase AMFR, negatively regulates the canonical Wnt signaling pathway in the lymphocytes by promoting the ubiquitin-mediated degradation of CTNNB1 and Wnt receptors FZD6 and LRP6. The sequence is that of Ubiquitin-associated domain-containing protein 2 (Ubac2) from Mus musculus (Mouse).